The following is a 142-amino-acid chain: NADH-quinone oxidoreductase subunit A (142 aa).

The next 3 helical transmembrane spans lie at 8–28, 63–83, and 93–113; these read FGTV…GYLT, FYVV…LFPW, and FALI…VYAW.

It belongs to the complex I subunit 3 family. In terms of assembly, NDH-1 is composed of 14 different subunits. Subunits NuoA, H, J, K, L, M, N constitute the membrane sector of the complex.

It is found in the cell inner membrane. It catalyses the reaction a quinone + NADH + 5 H(+)(in) = a quinol + NAD(+) + 4 H(+)(out). In terms of biological role, NDH-1 shuttles electrons from NADH, via FMN and iron-sulfur (Fe-S) centers, to quinones in the respiratory chain. The immediate electron acceptor for the enzyme in this species is believed to be a menaquinone. Couples the redox reaction to proton translocation (for every two electrons transferred, four hydrogen ions are translocated across the cytoplasmic membrane), and thus conserves the redox energy in a proton gradient. This Chlorobium phaeobacteroides (strain BS1) protein is NADH-quinone oxidoreductase subunit A.